Consider the following 610-residue polypeptide: Glutamine--fructose-6-phosphate aminotransferase [isomerizing] (610 aa).

Cys2 functions as the Nucleophile; for GATase activity in the catalytic mechanism. One can recognise a Glutamine amidotransferase type-2 domain in the interval 2–220 (CGIISAISKK…EGDIAILSHK (219 aa)). SIS domains follow at residues 289-429 (AHAL…LKTN) and 461-600 (LAKE…IDKP). The For Fru-6P isomerization activity role is filled by Lys605.

Homodimer.

The protein localises to the cytoplasm. It carries out the reaction D-fructose 6-phosphate + L-glutamine = D-glucosamine 6-phosphate + L-glutamate. Its function is as follows. Catalyzes the first step in hexosamine metabolism, converting fructose-6P into glucosamine-6P using glutamine as a nitrogen source. This chain is Glutamine--fructose-6-phosphate aminotransferase [isomerizing], found in Buchnera aphidicola subsp. Baizongia pistaciae (strain Bp).